A 228-amino-acid polypeptide reads, in one-letter code: Eukaryotic translation initiation factor 6 (228 aa).

It belongs to the eIF-6 family. As to quaternary structure, monomer. Associates with the 60S ribosomal subunit.

The protein resides in the cytoplasm. It localises to the nucleus. The protein localises to the nucleolus. Its function is as follows. Binds to the 60S ribosomal subunit and prevents its association with the 40S ribosomal subunit to form the 80S initiation complex in the cytoplasm. May also be involved in ribosome biogenesis. This is Eukaryotic translation initiation factor 6 from Guillardia theta (Cryptophyte).